We begin with the raw amino-acid sequence, 344 residues long: Membrane progestin receptor delta (344 aa).

Over 1–51 the chain is Cytoplasmic; sequence MLSLKLPQLLQVHQVPRVFWEDGIMSGYRRPTSSALDCVLSSFQMTNETVN. The helical transmembrane segment at 52 to 72 threads the bilayer; it reads IWTHFLPTWYFLWRLLALAGG. Topologically, residues 73–83 are extracellular; sequence PGFRAEPYHWP. A helical transmembrane segment spans residues 84–104; the sequence is LLVFLLPACLYPFASCCAHTF. At 105–113 the chain is on the cytoplasmic side; that stretch reads SSMSPRMRH. A helical transmembrane segment spans residues 114 to 134; the sequence is ICYFLDYGALSLYSLGCAFPY. Residues 135–147 lie on the Extracellular side of the membrane; that stretch reads AAYSMPASWLHGH. A helical membrane pass occupies residues 148–168; that stretch reads LHQFFVPAAALNSFLCTGLSC. Over 169–217 the chain is Cytoplasmic; sequence YSRFLELESPGLSKVLRTGAFAYPFLFDNLPLFYRLGLCWGRGHGCGQE. The chain crosses the membrane as a helical span at residues 218 to 238; it reads ALSTSHGYHLFCALLTGFLFA. Topologically, residues 239–258 are extracellular; it reads SHLPERLAPGRFDYIGHSHQ. The chain crosses the membrane as a helical span at residues 259 to 279; that stretch reads LFHICAVLGTHFQLEAVLADM. Over 280–292 the chain is Cytoplasmic; sequence GSRRAWLATQEPA. A helical membrane pass occupies residues 293 to 313; the sequence is LGLAGTVATLVLAAAGNLLII. At 314-344 the chain is on the extracellular side; it reads AAFTATLLRAPSTCPLLQGGPLEGGTQAKQQ.

This sequence belongs to the ADIPOR family. In terms of assembly, homodimer. In terms of tissue distribution, brain specific. Highly expressed in the hypothalamus, also expressed in forebrain, amygdala, corpus callosum and spinal cord.

It localises to the cell membrane. Functionally, plasma membrane progesterone (P4) receptor coupled to G proteins. Seems to act through a G(s) mediated pathway. Involved in neurosteroid inhibition of apoptosis. May be involved in regulating rapid P4 signaling in the nervous system. Also binds dehydroepiandrosterone (DHEA), pregnanolone, pregnenolone and allopregnanolone. The polypeptide is Membrane progestin receptor delta (Homo sapiens (Human)).